The sequence spans 106 residues: Toxin-like structure LSTX-D4 (106 aa).

An N-terminal signal peptide occupies residues 1 to 20; the sequence is MMKVLVVVALLVTLISYSSS. The propeptide occupies 21 to 41; that stretch reads EGIGDLEADELLSLMANEQTR. Disulfide bonds link Cys-45–Cys-60, Cys-52–Cys-69, Cys-59–Cys-85, and Cys-71–Cys-83.

It belongs to the neurotoxin 19 (CSTX) family. 02 (D7) subfamily. In terms of tissue distribution, expressed by the venom gland.

It is found in the secreted. This Lycosa singoriensis (Wolf spider) protein is Toxin-like structure LSTX-D4.